The sequence spans 365 residues: Palmitoyltransferase ZDHHC20 (365 aa).

Residues 1 to 14 (MAPWTLWRCCQRVV) are Cytoplasmic-facing. Residues 15–35 (GWVPVLFITFVVVWSYYAYVV) form a helical membrane-spanning segment. Topologically, residues 36-53 (ELCVFTIFGNEENGKTVV) are lumenal. Residues 54–74 (YLVAFHLFFVMFVWSYWMTIF) form a helical membrane-spanning segment. Residues 75–169 (TSPASPSKEF…NNCVGFSNYK (95 aa)) lie on the Cytoplasmic side of the membrane. One can recognise a DHHC domain in the interval 126 to 176 (RYCEKCQLIKPDRAHHCSACDSCILKMDHHCPWVNNCVGFSNYKFFLLFLL). Positions 128 and 131 each coordinate Zn(2+). Substrate contacts are provided by residues Lys-135 and 140-143 (HHCS). Zn(2+)-binding residues include His-141, Cys-142, Cys-145, Cys-148, and His-155. Cys-156 (S-palmitoyl cysteine intermediate) is an active-site residue. Cys-162 contributes to the Zn(2+) binding site. A helical membrane pass occupies residues 170–190 (FFLLFLLYSLLYCLFVAATVL). Residues 191–207 (EYFIKFWTNELTDTRAK) lie on the Lumenal side of the membrane. The helical transmembrane segment at 208–231 (FHVLFLFFVSAMFFISVLSLFSYH) threads the bilayer. Over 232-365 (CWLVGKNRTT…NNHVTVAIEN (134 aa)) the chain is Cytoplasmic. Residues Ser-305, Ser-330, and Ser-339 each carry the phosphoserine modification.

Belongs to the DHHC palmitoyltransferase family. Autopalmitoylated (in vitro).

Its subcellular location is the golgi apparatus membrane. The protein localises to the cell membrane. It is found in the cytoplasm. The protein resides in the perinuclear region. It localises to the endoplasmic reticulum membrane. Its subcellular location is the endoplasmic reticulum-Golgi intermediate compartment membrane. The enzyme catalyses L-cysteinyl-[protein] + hexadecanoyl-CoA = S-hexadecanoyl-L-cysteinyl-[protein] + CoA. The catalysed reaction is L-cysteinyl-[protein] + tetradecanoyl-CoA = S-tetradecanoyl-L-cysteinyl-[protein] + CoA. It catalyses the reaction L-cysteinyl-[protein] + octadecanoyl-CoA = S-octadecanoyl-L-cysteinyl-[protein] + CoA. Palmitoyltransferase that could catalyze the addition of palmitate onto various protein substrates. Catalyzes palmitoylation of Cys residues in the cytoplasmic C-terminus of EGFR, and modulates the duration of EGFR signaling by modulating palmitoylation-dependent EGFR internalization and degradation. Has a preference for acyl-CoA with C16 fatty acid chains. Can also utilize acyl-CoA with C14 and C18 fatty acid chains. May palmitoylate CALHM1 subunit of gustatory voltage-gated ion channels and modulate channel gating and kinetics. Functionally, (Microbial infection) Dominant palmitoyltransferase responsible for lipidation of SARS coronavirus-2/SARS-CoV-2 spike protein. Through a sequential action with ZDHHC9, rapidly and efficiently palmitoylates spike protein following its synthesis in the endoplasmic reticulum (ER). In the infected cell, promotes spike biogenesis by protecting it from premature ER degradation, increases half-life and controls the lipid organization of its immediate membrane environment. Once the virus has formed, spike palmitoylation controls fusion with the target cell. This Homo sapiens (Human) protein is Palmitoyltransferase ZDHHC20.